The following is a 628-amino-acid chain: 1-deoxy-D-xylulose-5-phosphate synthase (628 aa).

Thiamine diphosphate contacts are provided by residues histidine 77 and 118 to 120 (GHS). Aspartate 150 contacts Mg(2+). Thiamine diphosphate contacts are provided by residues 151–152 (GA), asparagine 180, tyrosine 288, and glutamate 369. Asparagine 180 serves as a coordination point for Mg(2+).

It belongs to the transketolase family. DXPS subfamily. In terms of assembly, homodimer. It depends on Mg(2+) as a cofactor. Requires thiamine diphosphate as cofactor.

It catalyses the reaction D-glyceraldehyde 3-phosphate + pyruvate + H(+) = 1-deoxy-D-xylulose 5-phosphate + CO2. The protein operates within metabolic intermediate biosynthesis; 1-deoxy-D-xylulose 5-phosphate biosynthesis; 1-deoxy-D-xylulose 5-phosphate from D-glyceraldehyde 3-phosphate and pyruvate: step 1/1. Functionally, catalyzes the acyloin condensation reaction between C atoms 2 and 3 of pyruvate and glyceraldehyde 3-phosphate to yield 1-deoxy-D-xylulose-5-phosphate (DXP). This chain is 1-deoxy-D-xylulose-5-phosphate synthase, found in Aquifex aeolicus (strain VF5).